Reading from the N-terminus, the 294-residue chain is 4-hydroxy-tetrahydrodipicolinate synthase (294 aa).

Threonine 47 contacts pyruvate. The active-site Proton donor/acceptor is tyrosine 135. The Schiff-base intermediate with substrate role is filled by lysine 164. Valine 206 is a binding site for pyruvate.

This sequence belongs to the DapA family. Homotetramer; dimer of dimers.

It is found in the cytoplasm. It carries out the reaction L-aspartate 4-semialdehyde + pyruvate = (2S,4S)-4-hydroxy-2,3,4,5-tetrahydrodipicolinate + H2O + H(+). It functions in the pathway amino-acid biosynthesis; L-lysine biosynthesis via DAP pathway; (S)-tetrahydrodipicolinate from L-aspartate: step 3/4. Its function is as follows. Catalyzes the condensation of (S)-aspartate-beta-semialdehyde [(S)-ASA] and pyruvate to 4-hydroxy-tetrahydrodipicolinate (HTPA). The sequence is that of 4-hydroxy-tetrahydrodipicolinate synthase from Lachnoclostridium phytofermentans (strain ATCC 700394 / DSM 18823 / ISDg) (Clostridium phytofermentans).